The chain runs to 729 residues: Polyribonucleotide nucleotidyltransferase (729 aa).

The segment at 399 to 419 is disordered; sequence YMHNYNFPPYSTGETGRVGSP. Mg(2+) contacts are provided by Asp509 and Asp515. The 60-residue stretch at 575–634 folds into the KH domain; it reads PRVISVKIPVDKIGEVIGPKGKMINQIQADSGAEITVEDDGTIYIGAADGPAAETARSAI. Residues 646 to 718 enclose the S1 motif domain; it reads GERYLGTIVK…ARGKISLAPG (73 aa).

This sequence belongs to the polyribonucleotide nucleotidyltransferase family. Mg(2+) serves as cofactor.

It is found in the cytoplasm. The catalysed reaction is RNA(n+1) + phosphate = RNA(n) + a ribonucleoside 5'-diphosphate. Functionally, involved in mRNA degradation. Catalyzes the phosphorolysis of single-stranded polyribonucleotides processively in the 3'- to 5'-direction. The polypeptide is Polyribonucleotide nucleotidyltransferase (Parafrankia sp. (strain EAN1pec)).